We begin with the raw amino-acid sequence, 245 residues long: Carbohydrate deacetylase 1 (245 aa).

The Mg(2+) site is built by His-59 and His-125.

The protein belongs to the YdjC deacetylase family. As to quaternary structure, homodimer. The cofactor is Mg(2+).

Functionally, probably catalyzes the deacetylation of acetylated carbohydrates an important step in the degradation of oligosaccharides. The polypeptide is Carbohydrate deacetylase 1 (Listeria innocua serovar 6a (strain ATCC BAA-680 / CLIP 11262)).